Here is a 799-residue protein sequence, read N- to C-terminus: Potassium transporter 21 (799 aa).

Residues 1–56 (MDPGVEKKKQQMELVDVESGGLPVERQDSLFREAVRAEHAGAAHWDEQDSWGRTMS) lie on the Cytoplasmic side of the membrane. A helical membrane pass occupies residues 57–77 (LAFQCVGILYGDIGTSSLYVY). The Extracellular segment spans residues 78–93 (SSTFEHGIGHPDDVVG). A helical transmembrane segment spans residues 94 to 114 (VLSLIVYSFMLFTVIKIVFVA). The Cytoplasmic segment spans residues 115 to 181 (LHANDHGDGG…QLLEASKAAK (67 aa)). A helical membrane pass occupies residues 182–202 (ISLFLLTILAIAMVISDAVLT). Topologically, residues 203–219 (PPISVLSAVGGLREKVP) are extracellular. The chain crosses the membrane as a helical span at residues 220–240 (HLTTDQIVWITVAILVVLFAI). Residues 241–251 (QRYGTDKVGYS) lie on the Cytoplasmic side of the membrane. Residues 252–272 (FAPIILLWLLLIGATGLYNLI) form a helical membrane-spanning segment. Over 273–301 (KHDISVLRAFNPKYIIDYFRRNKKEGWVS) the chain is Extracellular. Residues 302–322 (LGSILLCFTGSEALFANLGYF) traverse the membrane as a helical segment. The Cytoplasmic segment spans residues 323–328 (SIRSIQ). The chain crosses the membrane as a helical span at residues 329–349 (LSFSFALLPSVLLTYIGQAAF). At 350-362 (LSKNPKNVANTFF) the chain is on the extracellular side. A helical membrane pass occupies residues 363 to 383 (AATPISLFWPTFIMAIAASII). Over 384 to 420 (GSQAMISCAFATVSHLQSLSCFPRVKILHTSKRFPGQ) the chain is Cytoplasmic. A helical membrane pass occupies residues 421–441 (LYIPGVNFLLCVAACVVTVSF). The Extracellular segment spans residues 442–452 (KTTVIIGKAHE). The chain crosses the membrane as a helical span at residues 453–473 (ICVILVMIITTLLMTIVMLLV). Residues 474 to 475 (WK) are Cytoplasmic-facing. The chain crosses the membrane as a helical span at residues 476–496 (INILWVALFFITFTSTEAVYL). Residues 497–508 (SSVLYKFTHGPY) are Extracellular-facing. The chain crosses the membrane as a helical span at residues 509-529 (VPVAMSVVLMVVMIVWHYVHV). At 530–799 (KRYKYELEHT…LLKVGISYEI (270 aa)) the chain is on the cytoplasmic side.

It belongs to the HAK/KUP transporter (TC 2.A.72.3) family.

It is found in the membrane. High-affinity potassium transporter. This is Potassium transporter 21 (HAK21) from Oryza sativa subsp. japonica (Rice).